Here is a 285-residue protein sequence, read N- to C-terminus: Protein unc-1 (285 aa).

2 consecutive transmembrane segments (helical) span residues Ile27–Phe47 and Ile69–Ile89.

The protein belongs to the band 7/mec-2 family.

The protein localises to the cell membrane. It localises to the cell junction. It is found in the gap junction. The polypeptide is Protein unc-1 (unc-1) (Caenorhabditis elegans).